A 1140-amino-acid polypeptide reads, in one-letter code: Structural maintenance of chromosomes protein 6 (1140 aa).

The segment at 1–63 (MTTELTNVSL…ERQSRLQRSS (63 aa)) is disordered. The segment covering 14-28 (ITEKTSENRRKRDSD) has biased composition (basic and acidic residues). 2 short sequence motifs (nuclear localization signal) span residues 22–25 (RRKR) and 41–44 (KRIR). Residues 47–57 (RNQDNRPERQS) show a composition bias toward basic and acidic residues. Residue 124 to 131 (GHNGSGKS) participates in ATP binding. 3 coiled-coil regions span residues 262–290 (IQLK…NKKT), 329–369 (AQVV…QSDI), and 448–493 (GSQI…GGNL). Residues 494–710 (TSLLTKKDSI…WNRPPRIGFS (217 aa)) form a flexible hinge region. 2 coiled-coil regions span residues 711–978 (SSTS…RNEM) and 1113–1140 (IGLD…STAP).

The protein belongs to the SMC family. SMC6 subfamily. In terms of assembly, two subcomplexes smc5-smc6-nse2 and nse1-nse3-nse4 exist. These subcomplexes are then brought together via a number of interactions, forming the Smc5-Smc6 complex. Sumoylated by nse2.

It localises to the nucleus. Its subcellular location is the chromosome. Acts in a DNA repair pathway for removal of UV-induced DNA damage that is distinct from classical nucleotide excision repair and in repair of ionizing radiation damage. Functions in homologous recombination repair of DNA double strand breaks and in recovery of stalled replication forks. Plays a critical role in meiosis. The polypeptide is Structural maintenance of chromosomes protein 6 (smc6) (Schizosaccharomyces pombe (strain 972 / ATCC 24843) (Fission yeast)).